The chain runs to 128 residues: MFS18 protein (128 aa).

The N-terminal stretch at 1-25 is a signal peptide; that stretch reads MARSSKMMVAARLLALALAVSTAEA. Residues 26–79 are disordered; the sequence is RNIKTTTTEKKDDAVVQPQTFPPFDRLGGGASPAFGGLPGGSIPGSSIPGFSMP. Gly residues predominate over residues 52–68; sequence LGGGASPAFGGLPGGSI. 11 consecutive repeat copies span residues 64-67, 64-75, 69-72, 69-80, 74-77, 79-82, 81-92, 86-89, 91-94, 104-107, and 113-116. The segment at 64 to 92 is 3 X approximate tandem repeats; the sequence is PGGSIPGSSIPGFSMPGSGSSLPGFSLPG. Residues 64–116 form an 8 X 4 AA approximate repeats region; that stretch reads PGGSIPGSSIPGFSMPGSGSSLPGFSLPGSGTMPLFGGGSPGFSGFGGMPGSP. Low complexity predominate over residues 69–79; it reads PGSSIPGFSMP. A compositionally biased stretch (gly residues) spans 99 to 113; that stretch reads FGGGSPGFSGFGGMP. The segment at 99–128 is disordered; sequence FGGGSPGFSGFGGMPGSPTAGSVPEHANKP.

Enhanced expression in male flowers. Accumulates in the glumes and in anther walls, paleas and lemmas of mature florets.

This chain is MFS18 protein (MFS18), found in Zea mays (Maize).